A 561-amino-acid polypeptide reads, in one-letter code: Asparagine synthetase [glutamine-hydrolyzing] (561 aa).

The active-site For GATase activity is the cysteine 2. The Glutamine amidotransferase type-2 domain occupies 2-191 (CGIWALFGSD…PGHYEVLDLK (190 aa)). L-glutamine-binding positions include 49 to 53 (RLAVV), 75 to 77 (NGE), and aspartate 97. Residues 213-536 (HALYDNVEKL…PGRADWLSHY (324 aa)) enclose the Asparagine synthetase domain. Residues leucine 256, isoleucine 288, and 363 to 364 (SG) contribute to the ATP site. Lysine 385 carries the N6-acetyllysine modification. The residue at position 545 (threonine 545) is a Phosphothreonine. Residue serine 557 is modified to Phosphoserine.

The enzyme catalyses L-aspartate + L-glutamine + ATP + H2O = L-asparagine + L-glutamate + AMP + diphosphate + H(+). It participates in amino-acid biosynthesis; L-asparagine biosynthesis; L-asparagine from L-aspartate (L-Gln route): step 1/1. In Homo sapiens (Human), this protein is Asparagine synthetase [glutamine-hydrolyzing] (ASNS).